The following is a 236-amino-acid chain: LexA repressor (236 aa).

The tract at residues 1 to 25 is disordered; it reads MNDSNDTSVAGGAAGADSRVLSADS. The H-T-H motif DNA-binding region spans 51–71; the sequence is IREIGDAVGLTSTSSVAHQLR. Residues Ser160 and Lys197 each act as for autocatalytic cleavage activity in the active site.

The protein belongs to the peptidase S24 family. In terms of assembly, homodimer.

It carries out the reaction Hydrolysis of Ala-|-Gly bond in repressor LexA.. Represses a number of genes involved in the response to DNA damage (SOS response), including recA and lexA. In the presence of single-stranded DNA, RecA interacts with LexA causing an autocatalytic cleavage which disrupts the DNA-binding part of LexA, leading to derepression of the SOS regulon and eventually DNA repair. The protein is LexA repressor of Mycobacterium bovis (strain BCG / Pasteur 1173P2).